The following is a 180-amino-acid chain: Der GTPase-activating protein YihI (180 aa).

Disordered stretches follow at residues 1-88 and 147-180; these read MTRK…KERR and PEVT…FGKE. Composition is skewed to basic and acidic residues over residues 18 to 33, 50 to 67, 77 to 88, and 153 to 163; these read FREK…ARKS, EALD…DPRL, VEKKPTTKKERR, and APVRKGAKTDE. Residues 164–173 show a composition bias toward acidic residues; that stretch reads DLLDQFENMD.

The protein belongs to the YihI family. Interacts with Der.

Functionally, a GTPase-activating protein (GAP) that modifies Der/EngA GTPase function. May play a role in ribosome biogenesis. This chain is Der GTPase-activating protein YihI, found in Photobacterium profundum (strain SS9).